We begin with the raw amino-acid sequence, 279 residues long: Tryptophan 2,3-dioxygenase (279 aa).

Substrate is bound by residues 48–52 (FIIQH), Tyr-110, and Arg-114. Position 237 (His-237) interacts with heme. Residue Thr-251 participates in substrate binding.

Belongs to the tryptophan 2,3-dioxygenase family. In terms of assembly, homotetramer. The cofactor is heme.

It carries out the reaction L-tryptophan + O2 = N-formyl-L-kynurenine. It participates in amino-acid degradation; L-tryptophan degradation via kynurenine pathway; L-kynurenine from L-tryptophan: step 1/2. Its function is as follows. Heme-dependent dioxygenase that catalyzes the oxidative cleavage of the L-tryptophan (L-Trp) pyrrole ring and converts L-tryptophan to N-formyl-L-kynurenine. Catalyzes the oxidative cleavage of the indole moiety. This Ruegeria sp. (strain TM1040) (Silicibacter sp.) protein is Tryptophan 2,3-dioxygenase.